We begin with the raw amino-acid sequence, 54 residues long: ATP synthase protein 8 (54 aa).

The helical transmembrane segment at 9–29 threads the bilayer; the sequence is WIINFFIVWTADFTLLIVLSI.

Belongs to the ATPase protein 8 family. In terms of assembly, F-type ATPases have 2 components, CF(1) - the catalytic core - and CF(0) - the membrane proton channel.

Its subcellular location is the mitochondrion membrane. Its function is as follows. Mitochondrial membrane ATP synthase (F(1)F(0) ATP synthase or Complex V) produces ATP from ADP in the presence of a proton gradient across the membrane which is generated by electron transport complexes of the respiratory chain. F-type ATPases consist of two structural domains, F(1) - containing the extramembraneous catalytic core and F(0) - containing the membrane proton channel, linked together by a central stalk and a peripheral stalk. During catalysis, ATP synthesis in the catalytic domain of F(1) is coupled via a rotary mechanism of the central stalk subunits to proton translocation. Part of the complex F(0) domain. Minor subunit located with subunit a in the membrane. This Arbacia lixula (Black urchin) protein is ATP synthase protein 8 (MT-ATP8).